Consider the following 188-residue polypeptide: Elongation factor P (188 aa).

Belongs to the elongation factor P family.

Its subcellular location is the cytoplasm. Its pathway is protein biosynthesis; polypeptide chain elongation. Its function is as follows. Involved in peptide bond synthesis. Stimulates efficient translation and peptide-bond synthesis on native or reconstituted 70S ribosomes in vitro. Probably functions indirectly by altering the affinity of the ribosome for aminoacyl-tRNA, thus increasing their reactivity as acceptors for peptidyl transferase. This Rickettsia akari (strain Hartford) protein is Elongation factor P.